Consider the following 496-residue polypeptide: Histidine--tRNA ligase (496 aa).

Belongs to the class-II aminoacyl-tRNA synthetase family. In terms of assembly, homodimer.

It is found in the cytoplasm. The catalysed reaction is tRNA(His) + L-histidine + ATP = L-histidyl-tRNA(His) + AMP + diphosphate + H(+). This chain is Histidine--tRNA ligase, found in Bartonella bacilliformis (strain ATCC 35685 / KC583 / Herrer 020/F12,63).